The following is a 363-amino-acid chain: Photosystem II protein D1 1 (363 aa).

The next 3 helical transmembrane spans lie at Y32 to I49, H121 to L136, and W145 to A159. H121 contributes to the chlorophyll a binding site. Residue Y129 coordinates pheophytin a. [CaMn4O5] cluster is bound by residues E173 and E192. A helical transmembrane segment spans residues F200 to L221. H201 serves as a coordination point for chlorophyll a. Residues H218 and A268–F269 contribute to the a quinone site. Fe cation is bound at residue H218. H276 contacts Fe cation. Residues L278 to L292 traverse the membrane as a helical segment. [CaMn4O5] cluster contacts are provided by H336 and A348. A propeptide spanning residues S349–S363 is cleaved from the precursor.

It belongs to the reaction center PufL/M/PsbA/D family. As to quaternary structure, PSII is composed of 1 copy each of membrane proteins PsbA, PsbB, PsbC, PsbD, PsbE, PsbF, PsbH, PsbI, PsbJ, PsbK, PsbL, PsbM, PsbT, PsbX, PsbY, PsbZ, Psb30/Ycf12, peripheral proteins PsbO, CyanoQ (PsbQ), PsbU, PsbV and a large number of cofactors. It forms dimeric complexes. It depends on The D1/D2 heterodimer binds P680, chlorophylls that are the primary electron donor of PSII, and subsequent electron acceptors. It shares a non-heme iron and each subunit binds pheophytin, quinone, additional chlorophylls, carotenoids and lipids. D1 provides most of the ligands for the Mn4-Ca-O5 cluster of the oxygen-evolving complex (OEC). There is also a Cl(-1) ion associated with D1 and D2, which is required for oxygen evolution. The PSII complex binds additional chlorophylls, carotenoids and specific lipids. as a cofactor. Post-translationally, tyr-164 forms a radical intermediate that is referred to as redox-active TyrZ, YZ or Y-Z. In terms of processing, C-terminally processed by CtpA; processing is essential to allow assembly of the oxygen-evolving complex and thus photosynthetic growth.

The protein localises to the cellular thylakoid membrane. It catalyses the reaction 2 a plastoquinone + 4 hnu + 2 H2O = 2 a plastoquinol + O2. Functionally, photosystem II (PSII) is a light-driven water:plastoquinone oxidoreductase that uses light energy to abstract electrons from H(2)O, generating O(2) and a proton gradient subsequently used for ATP formation. It consists of a core antenna complex that captures photons, and an electron transfer chain that converts photonic excitation into a charge separation. The D1/D2 (PsbA/PsbD) reaction center heterodimer binds P680, the primary electron donor of PSII as well as several subsequent electron acceptors. The polypeptide is Photosystem II protein D1 1 (Acaryochloris marina (strain MBIC 11017)).